The following is a 72-amino-acid chain: MNNSNNLDYFTLYIIFSIAFMLITLLVILIAKPSTGLGEVLVTINLLNALVWLAINLVNRLRERLVNHRDQQ.

Residues 1–9 lie on the Cytoplasmic side of the membrane; that stretch reads MNNSNNLDY. The chain crosses the membrane as a helical span at residues 10–30; that stretch reads FTLYIIFSIAFMLITLLVILI. The Periplasmic segment spans residues 31–34; the sequence is AKPS. The helical transmembrane segment at 35–55 threads the bilayer; it reads TGLGEVLVTINLLNALVWLAI. At 56 to 72 the chain is on the cytoplasmic side; it reads NLVNRLRERLVNHRDQQ.

Interacts with FtsL, FtsQ, FtsI, FtsN, and probably many other cell division proteins.

Its subcellular location is the cell inner membrane. Its function is as follows. Could be involved in cell division. May participate in the stabilization of the cell divisome under specific conditions. The protein is Inner membrane protein YmgF (ymgF) of Escherichia coli (strain K12).